Here is a 129-residue protein sequence, read N- to C-terminus: Lysozyme C (129 aa).

Residues 1–129 (KVYGRCELAA…VNAWIRGCRL (129 aa)) enclose the C-type lysozyme domain. 4 cysteine pairs are disulfide-bonded: Cys-6/Cys-127, Cys-30/Cys-115, Cys-64/Cys-80, and Cys-76/Cys-94. Active-site residues include Glu-35 and Asp-52.

Belongs to the glycosyl hydrolase 22 family. In terms of assembly, monomer.

The protein resides in the secreted. It carries out the reaction Hydrolysis of (1-&gt;4)-beta-linkages between N-acetylmuramic acid and N-acetyl-D-glucosamine residues in a peptidoglycan and between N-acetyl-D-glucosamine residues in chitodextrins.. Functionally, lysozymes have primarily a bacteriolytic function; those in tissues and body fluids are associated with the monocyte-macrophage system and enhance the activity of immunoagents. This chain is Lysozyme C (LYZ), found in Syrmaticus reevesii (Reeves's pheasant).